The following is a 191-amino-acid chain: CASP-like protein 2U4 (191 aa).

The Cytoplasmic portion of the chain corresponds to 1 to 25 (MGAYDGAEAPRAAPASTAANSRPSR). The chain crosses the membrane as a helical span at residues 26–46 (LLLLHSLLLRLVAVVLSILVI). Residues 47 to 68 (AVMVHAKQRVMIFKAEWDNSKA) are Extracellular-facing. The helical transmembrane segment at 69–89 (FVALVTISAICLGYSFLQFIL) threads the bilayer. Residues 90-114 (SAFHLCSKSWKSPTKCWAWMNFIAD) are Cytoplasmic-facing. A helical membrane pass occupies residues 115 to 135 (QILTYAMLGAAAAAAELAYIA). At 136–157 (KNGSSRAQWQPICSTFNTFCTR) the chain is on the extracellular side. An N-linked (GlcNAc...) asparagine glycan is attached at asparagine 137. Residues 158–178 (AGASIILSFIAVLALANSSAI) traverse the membrane as a helical segment. At 179–191 (SAYHLFRRPSSSV) the chain is on the cytoplasmic side.

This sequence belongs to the Casparian strip membrane proteins (CASP) family. As to quaternary structure, homodimer and heterodimers.

Its subcellular location is the cell membrane. The polypeptide is CASP-like protein 2U4 (Selaginella moellendorffii (Spikemoss)).